A 365-amino-acid polypeptide reads, in one-letter code: uncharacterized protein (365 aa).

31-38 serves as a coordination point for ATP; that stretch reads GPINSGKT.

It belongs to the archaeal ATPase family.

This is an uncharacterized protein from Methanocaldococcus jannaschii (strain ATCC 43067 / DSM 2661 / JAL-1 / JCM 10045 / NBRC 100440) (Methanococcus jannaschii).